The chain runs to 945 residues: Bifunctional glutamine synthetase adenylyltransferase/adenylyl-removing enzyme (945 aa).

The interval 1 to 441 (MLPLSAALQT…VFNDLIGDDS (441 aa)) is adenylyl removase. Positions 450 to 945 (YQHYHSLWQD…VRASWAKWLG (496 aa)) are adenylyl transferase.

Belongs to the GlnE family. Requires Mg(2+) as cofactor.

The catalysed reaction is [glutamine synthetase]-O(4)-(5'-adenylyl)-L-tyrosine + phosphate = [glutamine synthetase]-L-tyrosine + ADP. It carries out the reaction [glutamine synthetase]-L-tyrosine + ATP = [glutamine synthetase]-O(4)-(5'-adenylyl)-L-tyrosine + diphosphate. Functionally, involved in the regulation of glutamine synthetase GlnA, a key enzyme in the process to assimilate ammonia. When cellular nitrogen levels are high, the C-terminal adenylyl transferase (AT) inactivates GlnA by covalent transfer of an adenylyl group from ATP to specific tyrosine residue of GlnA, thus reducing its activity. Conversely, when nitrogen levels are low, the N-terminal adenylyl removase (AR) activates GlnA by removing the adenylyl group by phosphorolysis, increasing its activity. The regulatory region of GlnE binds the signal transduction protein PII (GlnB) which indicates the nitrogen status of the cell. This is Bifunctional glutamine synthetase adenylyltransferase/adenylyl-removing enzyme from Serratia proteamaculans (strain 568).